A 597-amino-acid chain; its full sequence is K(+) efflux antiporter 6 (597 aa).

The signal sequence occupies residues 1–35 (MVEGRRRRRFSLSSQQLALLLLLLSFFLCFSVASP). 12 consecutive transmembrane segments (helical) span residues 177–197 (LISD…AFAC), 201–221 (PVIT…LNFI), 224–244 (MVQV…ALGL), 257–277 (VAVL…GITV), 287–307 (GVFV…KFLM), 321–341 (IGIL…LPVL), 351–371 (MLSI…LSIL), 396–416 (LAAV…GLSL), 440–460 (IEPI…MLVN), 461–481 (VHFL…VIII), 499–519 (TALL…VLLS), and 543–563 (LVTT…GILL).

This sequence belongs to the monovalent cation:proton antiporter 2 (CPA2) transporter (TC 2.A.37) family. KEA (TC 2.A.37.1) subfamily. In terms of tissue distribution, expressed in roots, stems, leaves, flowers and silique.

It localises to the golgi apparatus membrane. Its subcellular location is the golgi apparatus. The protein resides in the trans-Golgi network membrane. It is found in the prevacuolar compartment membrane. The protein localises to the endomembrane system. The enzyme catalyses K(+)(in) + H(+)(out) = K(+)(out) + H(+)(in). Its function is as follows. Electroneutral K(+)/H(+) efflux antiporter involved in K(+) homeostasis and osmotic adjustment. Together with KEA4 and KEA5, promotes growth and development, and facilitates endosomal pH and ions homeostasis, as well as salt tolerance (e.g. K(+), NaCl and LiCl), probably by supporting cell wall biosynthesis during rapid etiolated seedling growth. In Arabidopsis thaliana (Mouse-ear cress), this protein is K(+) efflux antiporter 6.